The following is a 537-amino-acid chain: Synaptotagmin-2 (537 aa).

Over 1–2 (MG) the chain is Cytoplasmic. Residues 3–23 (IISTILGVIGFGFGTTIGIVI) traverse the membrane as a helical segment. At 24 to 537 (GYYLFIYFQS…QIELQWRNSS (514 aa)) the chain is on the lumenal side. The region spanning 67 to 249 (DFDRIDWLNK…WPKTLNVQIM (183 aa)) is the SMP-LTD domain. Positions 227 to 505 (QEIIKDQVAN…TLGYVVINLG (279 aa)) are phospholipid binding. C2 domains are found at residues 240–362 (WPKT…LMTL) and 402–517 (DPNA…NDKY). Ca(2+) contacts are provided by aspartate 276, aspartate 282, aspartate 332, and glutamate 334.

The protein belongs to the synaptotagmin family. The cofactor is Ca(2+).

The protein resides in the golgi apparatus membrane. Its function is as follows. May play an important role in regulating an unconventional protein trafficking from the cytosol to the extracellular matrix. The sequence is that of Synaptotagmin-2 (SYT2) from Arabidopsis thaliana (Mouse-ear cress).